Consider the following 264-residue polypeptide: Phosphonoacetaldehyde hydrolase (264 aa).

Aspartate 9 (nucleophile) is an active-site residue. Aspartate 9 and alanine 11 together coordinate Mg(2+). The Schiff-base intermediate with substrate role is filled by lysine 50. Aspartate 183 is a Mg(2+) binding site.

Belongs to the HAD-like hydrolase superfamily. PhnX family. As to quaternary structure, homodimer. Mg(2+) serves as cofactor.

It carries out the reaction phosphonoacetaldehyde + H2O = acetaldehyde + phosphate + H(+). In terms of biological role, involved in phosphonate degradation. The protein is Phosphonoacetaldehyde hydrolase of Bacillus mycoides (strain KBAB4) (Bacillus weihenstephanensis).